The following is a 66-amino-acid chain: Gas vesicle protein A (66 aa).

The protein belongs to the gas vesicle GvpA family. In terms of assembly, the gas vesicle shell is 2 nm thick and consists of a single layer of this protein. It forms helical ribs nearly perpendicular to the long axis of the vesicle.

Its subcellular location is the gas vesicle shell. In terms of biological role, gas vesicles are hollow, gas filled proteinaceous nanostructures found in some microorganisms. During planktonic growth they allow positioning of the organism at a favorable depth for light or nutrient acquisition. GvpA forms the protein shell. The polypeptide is Gas vesicle protein A (Thiocapsa pendens (Amoebobacter pendens)).